Consider the following 449-residue polypeptide: Protein tweety homolog 1 (449 aa).

Residues 1–43 (MSSSHGYRASWWTYILHQVPHTNFQFEVVDNQFAPQEWPYQQA) lie on the Extracellular side of the membrane. A helical transmembrane segment spans residues 44 to 64 (LLFLASIAGLCLAISLILICV). Over 65-86 (YLIRFCCCSSQEDDDSKSHRVC) the chain is Cytoplasmic. Residues 87–107 (CVTWSCVAAVIICCAGIGIGF) traverse the membrane as a helical segment. Residues 108 to 212 (YGNSETNDGV…QVNFIEDYRW (105 aa)) lie on the Extracellular side of the membrane. N-linked (GlcNAc...) asparagine glycosylation occurs at Asn-128. A helical membrane pass occupies residues 213 to 233 (LAYILLLLLDLIICLFTLLGL). At 234–238 (AKQIK) the chain is on the cytoplasmic side. A helical transmembrane segment spans residues 239–259 (WLVIVMTVVSFFVLLLSWGSM). The Extracellular segment spans residues 260–388 (GLEMATAVGL…LKGLCYDGME (129 aa)). Cystine bridges form between Cys-273-Cys-383 and Cys-301-Cys-368. N-linked (GlcNAc...) asparagine glycosylation is found at Asn-282 and Asn-353. The helical transmembrane segment at 389 to 409 (GILFLLLFSFLSALSFTAAIC) threads the bilayer. The Cytoplasmic segment spans residues 410–449 (SLPRAWKRFQNRDLDYDDMDEDDPFNPQESKRFVQWQSSI).

It belongs to the tweety family. As to quaternary structure, homotetramer; disulfide-linked. Homodimer.

The protein resides in the cell membrane. It carries out the reaction chloride(in) = chloride(out). It catalyses the reaction L-glutamate(out) = L-glutamate(in). Functionally, may act as a calcium-independent, swelling-dependent volume-regulated anion channel (VRAC-swell) which plays a pivotal role in the process of regulatory volume decrease (RVD) in the brain through the efflux of anions like chloride and organic osmolytes like glutamate. This chain is Protein tweety homolog 1 (ttyh1), found in Xenopus tropicalis (Western clawed frog).